Here is a 690-residue protein sequence, read N- to C-terminus: Elongation factor G (690 aa).

Positions 8–282 (ERVRNIGIAA…AVIDYLPAPV (275 aa)) constitute a tr-type G domain. GTP-binding positions include 17–24 (AHIDAGKT), 81–85 (DTPGH), and 135–138 (NKMD).

It belongs to the TRAFAC class translation factor GTPase superfamily. Classic translation factor GTPase family. EF-G/EF-2 subfamily.

Its subcellular location is the cytoplasm. Its function is as follows. Catalyzes the GTP-dependent ribosomal translocation step during translation elongation. During this step, the ribosome changes from the pre-translocational (PRE) to the post-translocational (POST) state as the newly formed A-site-bound peptidyl-tRNA and P-site-bound deacylated tRNA move to the P and E sites, respectively. Catalyzes the coordinated movement of the two tRNA molecules, the mRNA and conformational changes in the ribosome. The sequence is that of Elongation factor G from Parasynechococcus marenigrum (strain WH8102).